A 681-amino-acid polypeptide reads, in one-letter code: Type VI secretion system spike protein VgrG2 (681 aa).

Residues 284 to 309 (AVAGSGKSNSSALQPGQTFSLTEHPN) form a disordered region. Residues 289 to 309 (GKSNSSALQPGQTFSLTEHPN) show a composition bias toward polar residues.

This sequence belongs to the VgrG protein family.

In terms of biological role, part of the type VI secretion system specialized secretion system, which delivers several virulence factors in both prokaryotic and eukaryotic cells during infection. Plays an essential role in bacterial mobility and biofilm formation. The sequence is that of Type VI secretion system spike protein VgrG2 from Aeromonas hydrophila.